A 238-amino-acid polypeptide reads, in one-letter code: Uridylate kinase (238 aa).

Residue 12 to 15 (KLSG) participates in ATP binding. Glycine 54 contacts UMP. Residues glycine 55 and arginine 59 each coordinate ATP. UMP is bound by residues aspartate 74 and 135 to 142 (TGNPFFTT). Residues threonine 162, tyrosine 168, and aspartate 171 each coordinate ATP.

This sequence belongs to the UMP kinase family. Homohexamer.

The protein localises to the cytoplasm. The catalysed reaction is UMP + ATP = UDP + ADP. The protein operates within pyrimidine metabolism; CTP biosynthesis via de novo pathway; UDP from UMP (UMPK route): step 1/1. Inhibited by UTP. Its function is as follows. Catalyzes the reversible phosphorylation of UMP to UDP. The chain is Uridylate kinase from Nitrosospira multiformis (strain ATCC 25196 / NCIMB 11849 / C 71).